A 123-amino-acid polypeptide reads, in one-letter code: NADH dehydrogenase [ubiquinone] 1 beta subcomplex subunit 7 (123 aa).

Residues 1–32 form a disordered region; that stretch reads MGTKLSVSLEGASTPETAPRVDRPPTFDPQYG. In terms of domain architecture, CHCH spans 59–102; sequence RDYCAHHLISLMKCQTQNAPFAGHACDGERGAWDKCEYDDHIMR. 2 short sequence motifs (cx9C motif) span residues 62-72 and 84-94; these read CAHHLISLMKC and CDGERGAWDKC. 2 cysteine pairs are disulfide-bonded: C62–C94 and C72–C84.

Belongs to the complex I NDUFB7 subunit family. As to quaternary structure, complex I is composed of 45 different subunits.

It localises to the mitochondrion. The protein localises to the mitochondrion inner membrane. Its subcellular location is the mitochondrion intermembrane space. In terms of biological role, accessory subunit of the mitochondrial membrane respiratory chain NADH dehydrogenase (Complex I), that is believed not to be involved in catalysis. Complex I functions in the transfer of electrons from NADH to the respiratory chain. The immediate electron acceptor for the enzyme is believed to be ubiquinone. This is NADH dehydrogenase [ubiquinone] 1 beta subcomplex subunit 7 from Caenorhabditis elegans.